A 147-amino-acid chain; its full sequence is MSRPTSSSESGIEEGLAFQPRFDASGLVTCVATDARTGDVLMVAHMNEEALRRTVETGDAWYYSRSRKALWRKGESSGQVQRVVEMRTDCDQDAVWIKVEQRGAACHTGRRSCFYRAVTRGEGGEARVAFVDADRLFDPADVYHKKS.

Aspartate 89 lines the Mg(2+) pocket. Cysteine 90 provides a ligand contact to Zn(2+). Mg(2+) is bound by residues aspartate 91 and aspartate 93. Residues cysteine 106 and cysteine 113 each coordinate Zn(2+).

It belongs to the PRA-CH family. Homodimer. It depends on Mg(2+) as a cofactor. Zn(2+) serves as cofactor.

It is found in the cytoplasm. The catalysed reaction is 1-(5-phospho-beta-D-ribosyl)-5'-AMP + H2O = 1-(5-phospho-beta-D-ribosyl)-5-[(5-phospho-beta-D-ribosylamino)methylideneamino]imidazole-4-carboxamide. The protein operates within amino-acid biosynthesis; L-histidine biosynthesis; L-histidine from 5-phospho-alpha-D-ribose 1-diphosphate: step 3/9. Its function is as follows. Catalyzes the hydrolysis of the adenine ring of phosphoribosyl-AMP. The sequence is that of Phosphoribosyl-AMP cyclohydrolase from Nitrobacter hamburgensis (strain DSM 10229 / NCIMB 13809 / X14).